The following is a 479-amino-acid chain: Glucan 1,3-beta-glucosidase 2 (479 aa).

Positions 1–21 are cleaved as a signal peptide; sequence MMLFLIHLMALCCMFVAEVAC. 6 N-linked (GlcNAc...) asparagine glycosylation sites follow: N25, N29, N63, N104, N187, and N193. The active-site Proton donor is the E227. N-linked (GlcNAc...) asparagine glycosylation is found at N254, N285, and N288. H306 (nucleophile) is an active-site residue. N318 and N451 each carry an N-linked (GlcNAc...) asparagine glycan. S456 carries GPI-anchor amidated serine lipidation. A propeptide spans 457-479 (removed in mature form); that stretch reads SASAIASNKMTLLLAFLLVILVI.

This sequence belongs to the glycosyl hydrolase 5 (cellulase A) family. In terms of processing, predicted to be a substrate for cleavage by KEX2.

The protein localises to the cell membrane. It is found in the secreted. The catalysed reaction is Successive hydrolysis of beta-D-glucose units from the non-reducing ends of (1-&gt;3)-beta-D-glucans, releasing alpha-glucose.. Beta-glucanases participate in the metabolism of beta-glucan, the main structural component of the cell wall. EXG2 is not heavily involved in the exoglucanase function of the adhesion process. This is Glucan 1,3-beta-glucosidase 2 (EXG2) from Candida albicans (strain SC5314 / ATCC MYA-2876) (Yeast).